The sequence spans 821 residues: Pentatricopeptide repeat-containing protein At4g04790, mitochondrial (821 aa).

Residues 1–74 (MVVSKVNKSL…KLLHVTTSDK (74 aa)) constitute a mitochondrion transit peptide. PPR repeat units follow at residues 372–406 (SSTS…GLMI), 407–441 (SADI…SVKP), 442–476 (NTEN…NLEP), 477–511 (NSSM…GVKP), 512–542 (DSIT…AGVQ), 544–574 (TKRI…PDVP), and 578–612 (QNEL…ECHV). The segment at 801 to 821 (AFSQAPNKKKPKKKMIVLSTK) is disordered.

Belongs to the PPR family. P subfamily.

Its subcellular location is the mitochondrion. In Arabidopsis thaliana (Mouse-ear cress), this protein is Pentatricopeptide repeat-containing protein At4g04790, mitochondrial.